Here is a 425-residue protein sequence, read N- to C-terminus: Septin-7 (425 aa).

One can recognise a Septin-type G domain in the interval 28-297; it reads RGFEFTLMVV…ENYRSRKLAA (270 aa). The tract at residues 38 to 45 is G1 motif; that stretch reads GESGLGKS. GTP contacts are provided by residues 38 to 45, Thr71, Gly97, 176 to 184, Gly231, and Arg246; these read GESGLGKS and KADTLTPEE. The interval 94 to 97 is G3 motif; that stretch reads DTPG. Positions 175–178 are G4 motif; sequence AKAD. Residues 324–421 are a coiled coil; the sequence is LAQMEEERRE…SRTLEKNKKK (98 aa).

This sequence belongs to the TRAFAC class TrmE-Era-EngA-EngB-Septin-like GTPase superfamily. Septin GTPase family. As to quaternary structure, monomer, and homodimer. Nucleotide binding promotes oligomerization. Can form heterooligomers with other family members and form filaments.

The protein resides in the cytoplasm. The protein localises to the chromosome. Its subcellular location is the centromere. It localises to the kinetochore. It is found in the cytoskeleton. The protein resides in the spindle. The protein localises to the cleavage furrow. Its subcellular location is the midbody. It localises to the cilium axoneme. Its function is as follows. Filament-forming cytoskeletal GTPase. Required for normal organization of the actin cytoskeleton. Required for normal progress through mitosis. Involved in cytokinesis. Plays a role in ciliogenesis and collective cell movements including convergent extension during gastrulation. Controls cell elongation but not polarization during convergent extension. The polypeptide is Septin-7 (Xenopus laevis (African clawed frog)).